A 288-amino-acid chain; its full sequence is Prohibitin-2 (288 aa).

A helical; Signal-anchor for type II membrane protein transmembrane segment spans residues 21 to 43 (GKYAFTGTGLLLALGLAGFAVQT). The AIM motif lies at 125–128 (YRTL).

It belongs to the prohibitin family. As to quaternary structure, the mitochondrial prohibitin complex consists of two subunits (phb1 and phb2). The subunits assemble into a membrane-associated ring-shaped supercomplex of approximately 1 mDa.

The protein localises to the mitochondrion inner membrane. Prohibitin probably acts as a holdase/unfoldase for the stabilization of newly synthesized mitochondrial proteins. Involved in mitophagy; may act as an adapter for atg8 that supports mitophagosome assembly. Negatively regulates the proteolytic processing of atg32 via the i-AAA protease. Acts as a negative regulator of the m-AAA protease. The sequence is that of Prohibitin-2 (phb2) from Schizosaccharomyces pombe (strain 972 / ATCC 24843) (Fission yeast).